The chain runs to 86 residues: Neurotoxin LmNaTx1 (86 aa).

The first 18 residues, 1–18 (MKILIIFVIAITVVGVQS), serve as a signal peptide directing secretion. The region spanning 19-85 (KDGYPIYSTG…VWTYAENTCG (67 aa)) is the LCN-type CS-alpha/beta domain. 4 disulfides stabilise this stretch: Cys33-Cys84, Cys37-Cys58, Cys44-Cys65, and Cys48-Cys67. Cys84 is modified (cysteine amide).

Belongs to the long (4 C-C) scorpion toxin superfamily. Sodium channel inhibitor family. Beta subfamily. As to expression, expressed by the venom gland.

It localises to the secreted. Binds voltage-independently at site-4 of sodium channels (Nav) and shift the voltage of activation toward more negative potentials thereby affecting sodium channel activation and promoting spontaneous and repetitive firing. The sequence is that of Neurotoxin LmNaTx1 from Lychas mucronatus (Chinese swimming scorpion).